The primary structure comprises 382 residues: 2-carboxy-1,4-naphthoquinone phytyltransferase, chloroplastic (382 aa).

Residues 1–66 (MVNFVSLCDI…RRNLRVRPIF (66 aa)) constitute a chloroplast transit peptide. 8 consecutive transmembrane segments (helical) span residues 99–119 (VALV…GLFL), 123–143 (YVTL…SNDV), 168–188 (TLAA…WTSL), 196–216 (ILLL…PFRL), 224–244 (PLCF…LLGS), 257–277 (VLSS…CSHF), 323–343 (ILPL…NLVS), and 361–381 (YYCV…LVIA).

The protein belongs to the MenA family. Type 2 subfamily.

It is found in the plastid. Its subcellular location is the chloroplast membrane. The enzyme catalyses 2-carboxy-1,4-naphthoquinone + phytyl diphosphate + H(+) = demethylphylloquinone + CO2 + diphosphate. In terms of biological role, involved in the synthesis of phylloquinone (vitamin K1). Catalyzes the transfer of a prenyl chain to 2-carboxy-1,4-naphthoquinone. The protein is 2-carboxy-1,4-naphthoquinone phytyltransferase, chloroplastic (ABC4) of Arabidopsis thaliana (Mouse-ear cress).